A 512-amino-acid polypeptide reads, in one-letter code: Alpha-amylase (512 aa).

A signal peptide spans 1–29 (MKQQKRLYARLLTLLFALIFLLPHSAAAA). Residues N133, D190, A210, D212, D223, D229, D231, and D233 each coordinate Ca(2+). Residue D190 participates in Na(+) binding. The Na(+) site is built by D212, D223, and D229. D260 serves as the catalytic Nucleophile. H264 provides a ligand contact to Ca(2+). The active-site Proton donor is the E290. Ca(2+)-binding residues include G329, Y331, H435, D436, and D459.

This sequence belongs to the glycosyl hydrolase 13 family. As to quaternary structure, monomer. Ca(2+) serves as cofactor. Na(+) is required as a cofactor.

It is found in the secreted. The catalysed reaction is Endohydrolysis of (1-&gt;4)-alpha-D-glucosidic linkages in polysaccharides containing three or more (1-&gt;4)-alpha-linked D-glucose units.. This is Alpha-amylase (amyS) from Bacillus licheniformis.